The primary structure comprises 1017 residues: MTRITKLCVLLLSSIGLLAAAQNQTETGWPLHDDGLTTDVQWDHYSFKVHGERIFVFSGEFHYWRIPVPGLWRDILEKIKAAGFTTFAFYSSWAWHAPNNHTVDFSTGARDITPIFELAKELGMYIIVRPGPYINAEASAGGFPLWLTTGDYGTLRNNDSRYTEAWKPYFEKMTEITSRYQITNGHNTFCYQIENEYGDQWLSDPSERVPNETAIAYMELLESSARENGILVPFTANDPNMNAMAWSRDWSNAGGNVDVVGLDSYPSCWTCDVSQCTSTNGEYVAYQVVEYYDYFLDFSPTMPSFMPEFQGGSYNPWAGPEGGCGDDTGVDFVNLFYRWNIAQRVTAMSLYMLYGGTNWGAIAAPVTATSYDYSSPISEDRSISSKYYETKLLSLFTRSARDLTMTDLIGNGTQYTNNTAVKAYELRNPTTNAGFYVTLHEDSTVGTNEAFSLRVNTSAGNLIVPRLGGSIRLNGHQSKIIVTDFTFGSETLLYSTAEVLTYAVIDKKPTLVLWVPTDESGEFAVKGAKSGSVVSKCQSCPAINFHQQGGNLIVGFTQSQGMSVVQIDNDIRVVLLDRTAAYKFWAPALTEDPLVPEDEAVVLIQGPYLVRSASLEKSTLAIKGDSINETAVEIFAPENVKTITWNGKQLKTSKSSYGSLKATIAAPASIQLPAFTSWKVNDSLPERLPTYDASGPAWVDANHMTTANPSKPATLPVLYADEYGFHNGVRLWRGYFNGTASGVFLNVQGGSAFGFSAYLNGHFLGSYLGNASIEQANQTFLFPNNITHPTTQNTLLVIHDDTGHDETTGALNPRGILEARLLPSDTTNNSTSPEFTHWRIAGTAGGESNLDPVRGAWNEDGLYAERVGWHLPGFDDSTWSSVSSSSSLSFTGATVKFFRTTIPLDIPRGLDVSISFVLGTPDNAPNAYRAQLFVNGYQYGRFNPYIGNQVVFPVPVGVLDYTGENTIGVAVWAQTEDGAGITVDWKVNYVADSSLDVSGLETGELRPGWSAERLKFA.

A signal peptide spans 1-20; sequence MTRITKLCVLLLSSIGLLAA. A glycan (N-linked (GlcNAc...) asparagine) is linked at asparagine 23. Residue tyrosine 90 coordinates substrate. An N-linked (GlcNAc...) asparagine glycan is attached at asparagine 100. Substrate-binding residues include asparagine 135, alanine 136, and glutamate 137. An N-linked (GlcNAc...) asparagine glycan is attached at asparagine 158. A substrate-binding site is contributed by asparagine 195. Glutamate 196 acts as the Proton donor in catalysis. The N-linked (GlcNAc...) asparagine glycan is linked to asparagine 211. A substrate-binding site is contributed by tyrosine 265. Cysteine 271 and cysteine 324 are joined by a disulfide. Glutamate 308 (nucleophile) is an active-site residue. Position 373 (tyrosine 373) interacts with substrate. Residues asparagine 411, asparagine 417, asparagine 456, asparagine 628, asparagine 681, asparagine 737, asparagine 770, asparagine 777, asparagine 785, asparagine 828, and asparagine 829 are each glycosylated (N-linked (GlcNAc...) asparagine).

Belongs to the glycosyl hydrolase 35 family.

Its subcellular location is the secreted. The catalysed reaction is Hydrolysis of terminal non-reducing beta-D-galactose residues in beta-D-galactosides.. Its function is as follows. Cleaves beta-linked terminal galactosyl residues from gangliosides, glycoproteins, and glycosaminoglycans. The chain is Probable beta-galactosidase B (lacB) from Aspergillus niger (strain ATCC MYA-4892 / CBS 513.88 / FGSC A1513).